A 405-amino-acid chain; its full sequence is Cytoplasmic tRNA 2-thiolation protein 2 (405 aa).

Belongs to the CTU2/NCS2 family.

It is found in the cytoplasm. Its pathway is tRNA modification; 5-methoxycarbonylmethyl-2-thiouridine-tRNA biosynthesis. In terms of biological role, plays a central role in 2-thiolation of mcm(5)S(2)U at tRNA wobble positions of tRNA(Lys), tRNA(Glu) and tRNA(Gln). May act by forming a heterodimer with NCS6/CTU1 that ligates sulfur from thiocarboxylated URM1 onto the uridine of tRNAs at wobble position. The chain is Cytoplasmic tRNA 2-thiolation protein 2 from Drosophila simulans (Fruit fly).